Consider the following 2045-residue polypeptide: Host cell factor 1 (2045 aa).

Ala2 bears the N-acetylalanine mark. Ser6 carries the phosphoserine modification. 5 Kelch repeats span residues 44–89 (LIVV…GFVC), 93–140 (RLLV…RLGH), 148–194 (KCYL…ITYG), 217–265 (KLVI…TIGN), and 266–313 (KMYV…LMDT). Glycyl lysine isopeptide (Lys-Gly) (interchain with G-Cter in ubiquitin) cross-links involve residues Lys105, Lys163, and Lys244. A Glycyl lysine isopeptide (Lys-Gly) (interchain with G-Cter in SUMO2) cross-link involves residue Lys282. Lys288 bears the N6-acetyllysine mark. Lys363 is covalently cross-linked (Glycyl lysine isopeptide (Lys-Gly) (interchain with G-Cter in ubiquitin)). The 92-residue stretch at 366 to 457 (PPARVQLVRA…VPQAATAPPS (92 aa)) folds into the Fibronectin type-III 1 domain. Positions 407–434 (ATATSPTPNPVPSVPANPPKSPAPAAAA) are disordered. Phosphoserine is present on Ser411. Residues 413–428 (TPNPVPSVPANPPKSP) show a composition bias toward pro residues. The required for interaction with OGT stretch occupies residues 500-550 (LVTMRPASQAGKAPVTVTSLPASVRMVVPTQSAQGTVIGSNPQMSGMAALA). Residues Arg504 and Arg524 each carry the omega-N-methylarginine modification. Phosphoserine is present on residues Ser598, Ser666, and Ser669. An interaction with SIN3A region spans residues 610 to 722 (LKTAAAQVGT…KGPLPAGTIL (113 aa)). The tract at residues 750–902 (ILGISSVSPS…SLAGAGAHST (153 aa)) is interaction with ZBTB17. Lys813 is modified (N6-acetyllysine). Residues 813–912 (KIITAVPKIA…SASLATPITT (100 aa)) are interaction with GABP2. 3 HCF repeat repeats span residues 1010–1035 (TLVCSNPPCETHETGTTNTATTTVVA), 1072–1097 (VRVCSNPPCETHETGTTNTATTATSN), and 1101–1126 (QHGCSNPPCETHETGTTSTATTAMSS). The HCF repeat 4; degenerate repeat unit spans residues 1157–1182 (VQGTVKPQCQTQQTNMTTTTMTVQAT). At Ser1204 the chain carries Phosphoserine. Position 1216 is an asymmetric dimethylarginine (Arg1216). 4 disordered regions span residues 1219–1242 (LSGPSSKDMPTGRQPETYHTYTTN), 1302–1375 (PCET…TSTG), 1444–1475 (TVTSNMSSNQDPPPAASDQGEVASTQGDSTNI), and 1494–1525 (TTVTQSTPVPGPSVPPPEELQVSPGPRQQLPP). Ser1223 is modified (phosphoserine). HCF repeat repeat units lie at residues 1295–1320 (TQVCSNPPCETHETGTTNTATTSNAG) and 1323–1348 (QRVCSNPPCETHETGTTHTATTATSN). The segment covering 1308-1321 (TGTTNTATTSNAGS) has biased composition (low complexity). The HCF repeat 7; degenerate repeat unit spans residues 1358-1383 (QQPASGHPCETHQTTSTGTTMSVSVG). The stretch at 1423–1448 (QRVCSNPPCETHETGTTHTATTVTSN) is one HCF repeat 8 repeat. At Thr1500 the chain carries Phosphothreonine. The segment covering 1502-1511 (VPGPSVPPPE) has biased composition (pro residues). Ser1506, Ser1516, and Ser1781 each carry phosphoserine. Fibronectin type-III domains follow at residues 1808-1898 (PPPP…TCLP) and 1900-2016 (FPGA…TSKD). Glycyl lysine isopeptide (Lys-Gly) (interchain with G-Cter in ubiquitin) cross-links involve residues Lys1817 and Lys1818. Ser1848 carries the post-translational modification Phosphoserine. The tract at residues 2004–2045 (ATQVRWLQETSKDSSGTKPASKRPMSSPEMKSAPKKSKADGQ) is disordered. N6-acetyllysine is present on Lys2015. A Glycyl lysine isopeptide (Lys-Gly) (interchain with G-Cter in SUMO2) cross-link involves residue Lys2034.

In terms of assembly, composed predominantly of six polypeptides ranging from 110 to 150 kDa and a minor 300 kDa polypeptide. The majority of N- and C-terminal cleavage products remain tightly, albeit non-covalently, associated. Interacts with POU2F1, CREB3, ZBTB17, EGR2, E2F4, CREBZF, SP1, GABP2, Sin3 HDAC complex (SIN3A, HDAC1, HDAC2, SUDS3), SAP30, SIN3B and FHL2. Component of a MLL1 complex, composed of at least the core components KMT2A/MLL1, ASH2L, HCFC1, WDR5 and RBBP5, as well as the facultative components BACC1, CHD8, DPY30, E2F6, HCFC2, HSP70, INO80C, KANSL1, LAS1L, MAX, MCRS1, MEN1, MGA, KAT8, PELP1, PHF20, PRP31, RING2, RUVBL1, RUVBL2, SENP3, TAF1, TAF4, TAF6, TAF7, TAF9 and TEX10. Component of a THAP1/THAP3-HCFC1-OGT complex that is required for the regulation of the transcriptional activity of RRM1. Interacts directly with THAP3 (via its HBM). Interacts (via the Kelch-repeat domain) with THAP1 (via the HBM); the interaction recruits HCHC1 to the RRM1. Interacts with THAP7 and THAP11 (via the HMB). Interacts directly with OGT; the interaction, which requires the HCFC1 cleavage site domain, glycosylates and promotes the proteolytic processing of HCFC1 and retains OGT in the nucleus. Component of the SET1 complex, at least composed of the catalytic subunit (SETD1A or SETD1B), WDR5, WDR82, RBBP5, ASH2L, CXXC1, HCFC1 and DPY30. Component of the NSL complex at least composed of MOF/KAT8, KANSL1, KANSL2, KANSL3, MCRS1, PHF20, OGT1/OGT, WDR5 and HCFC1. Component of a complex at least composed of ZNF335, HCFC1, CCAR2, EMSY, MKI67, RBBP5, ASH2L and WDR5; the complex is formed as a result of interactions between components of a nuclear receptor-mediated transcription complex and a histone methylation complex. Within the complex interacts with ZNF335. Interacts with TET2 and TET3. Interacts with HCFC1R1. Interacts with THAP11. Interacts (via Kelch domain) with KMT2E (via HBM motif). Interacts with E2F1. Accessory scaffold component of the polycomb repressive deubiquitinase (PR-DUB) complex, at least composed of BAP1, one of ASXL1, ASXL2 or (probably) ASXL3 and one of MBD5 or MBD6; the PR-DUB core associates with a number of accessory proteins, including FOXK1, FOXK2, KDM1B, HCFC1, YY1 and OGT. Interacts with YY1 (via Gly-rich region); the interaction is direct. Interacts with BAP1 (via HBM-like motif). In terms of processing, proteolytically cleaved at one or several PPCE--THET sites within the HCF repeats. Further cleavage of the primary N- and C-terminal chains results in a 'trimming' and accumulation of the smaller chains. Cleavage is promoted by O-glycosylation. Post-translationally, O-glycosylated. GlcNAcylation by OGT promotes proteolytic processing. Ubiquitinated. Lys-1817 and Lys-1818 are ubiquitinated both via 'Lys-48'- and 'Lys-63'-linked polyubiquitin chains. BAP1 mediated deubiquitination of 'Lys-48'-linked polyubiquitin chains; deubiquitination by BAP1 does not seem to stabilize the protein. As to expression, expressed in liver, pituitary gland, skeletal muscle, kidney, eye and brain (at protein level). Also observed at low level in heart, spleen and lung.

It is found in the nucleus. It localises to the cytoplasm. Functionally, transcriptional coregulator. Serves as a scaffold protein, bridging interactions between transcription factors, including THAP11 and ZNF143, and transcriptional coregulators. Involved in control of the cell cycle. Also antagonizes transactivation by ZBTB17 and GABP2; represses ZBTB17 activation of the p15(INK4b) promoter and inhibits its ability to recruit p300. Coactivator for EGR2 and GABP2. Tethers the chromatin modifying Set1/Ash2 histone H3 'Lys-4' methyltransferase (H3K4me) and Sin3 histone deacetylase (HDAC) complexes (involved in the activation and repression of transcription respectively) together. As part of the NSL complex it may be involved in acetylation of nucleosomal histone H4 on several lysine residues. Recruits KMT2E to E2F1 responsive promoters promoting transcriptional activation and thereby facilitates G1 to S phase transition. Modulates expression of homeobox protein PDX1, perhaps acting in concert with transcription factor E2F1, thereby regulating pancreatic beta-cell growth and glucose-stimulated insulin secretion. May negatively modulate transcriptional activity of FOXO3. The protein is Host cell factor 1 of Mus musculus (Mouse).